We begin with the raw amino-acid sequence, 106 residues long: Envelope small membrane protein (106 aa).

Over M1–E11 the chain is Virion surface. The helical transmembrane segment at N12–G32 threads the bilayer. Residues R33–T106 are Intravirion-facing.

It belongs to the gammacoronaviruses E protein family. As to quaternary structure, homooligomer. Interacts with the M membrane protein in the budding compartment of the host cell, which is located between endoplasmic reticulum and the Golgi complex. The cytoplasmic tails of both proteins are important for this function. Interacts with Nucleoprotein.

The protein localises to the host Golgi apparatus membrane. Functionally, plays a central role in virus morphogenesis and assembly. Acts as a viroporin and self-assembles in host membranes forming pentameric protein-lipid pores that allow ion transport. Also plays a role in the induction of apoptosis. This Gallus gallus (Chicken) protein is Envelope small membrane protein.